Here is a 5065-residue protein sequence, read N- to C-terminus: Dynein heavy chain-like protein 1 (5065 aa).

The segment at methionine 1–glutamate 1957 is stem. Residues glutamine 1677–lysine 1705 are a coiled coil. The segment at tyrosine 1958–serine 2179 is AAA 1. Glycine 1996–threonine 2003 is a binding site for ATP. The segment at phenylalanine 2203 to threonine 2223 is disordered. Residues asparagine 2204–asparagine 2215 are compositionally biased toward low complexity. AAA stretches follow at residues asparagine 2281–isoleucine 2632, aspartate 2751–alanine 3004, and isoleucine 3097–tyrosine 3367. Glycine 2319 to serine 2326 lines the ATP pocket. The interval glutamate 2507–asparagine 2529 is disordered. ATP is bound by residues glycine 2790–threonine 2797 and glycine 3135–threonine 3142. The tract at residues isoleucine 3386 to serine 3701 is stalk. Coiled-coil stretches lie at residues glutamate 3388–glutamine 3466 and threonine 3970–asparagine 3997. AAA stretches follow at residues leucine 3754–lysine 3983 and phenylalanine 4289–serine 4507. The span at lysine 4686 to lysine 4705 shows a compositional bias: basic and acidic residues. Residues lysine 4686 to glutamate 4727 are disordered.

Belongs to the dynein heavy chain family. In terms of assembly, consists of at least two heavy chains and a number of intermediate and light chains.

It is found in the cytoplasm. The protein resides in the cytoskeleton. Functionally, acts as a motor for the intracellular retrograde motility of vesicles and organelles along microtubules. Dynein has ATPase activity; the force-producing power stroke is thought to occur on release of ADP. This Plasmodium falciparum (isolate 3D7) protein is Dynein heavy chain-like protein 1.